A 162-amino-acid chain; its full sequence is UPF0262 protein HNE_1347 (162 aa).

This sequence belongs to the UPF0262 family.

This is UPF0262 protein HNE_1347 from Hyphomonas neptunium (strain ATCC 15444).